Reading from the N-terminus, the 72-residue chain is DNA-directed RNA polymerase subunit epsilon (72 aa).

The protein belongs to the RNA polymerase subunit epsilon family. In terms of assembly, RNAP is composed of a core of 2 alpha, a beta and a beta' subunit. The core is associated with a delta subunit, and at least one of epsilon or omega. When a sigma factor is associated with the core the holoenzyme is formed, which can initiate transcription.

The catalysed reaction is RNA(n) + a ribonucleoside 5'-triphosphate = RNA(n+1) + diphosphate. A non-essential component of RNA polymerase (RNAP). The chain is DNA-directed RNA polymerase subunit epsilon from Levilactobacillus brevis (strain ATCC 367 / BCRC 12310 / CIP 105137 / JCM 1170 / LMG 11437 / NCIMB 947 / NCTC 947) (Lactobacillus brevis).